The following is a 196-amino-acid chain: Adenylyl-sulfate kinase (196 aa).

Residue 31 to 38 (GLSGAGKS) participates in ATP binding. S105 (phosphoserine intermediate) is an active-site residue.

This sequence belongs to the APS kinase family.

The catalysed reaction is adenosine 5'-phosphosulfate + ATP = 3'-phosphoadenylyl sulfate + ADP + H(+). It participates in sulfur metabolism; hydrogen sulfide biosynthesis; sulfite from sulfate: step 2/3. Functionally, catalyzes the synthesis of activated sulfate. The sequence is that of Adenylyl-sulfate kinase from Aeromonas salmonicida (strain A449).